The primary structure comprises 76 residues: Acyl carrier protein (76 aa).

The Carrier domain maps to 1–76 (MATFDDVKDV…AAVDYIDNNQ (76 aa)). At serine 36 the chain carries O-(pantetheine 4'-phosphoryl)serine.

It belongs to the acyl carrier protein (ACP) family. Post-translationally, 4'-phosphopantetheine is transferred from CoA to a specific serine of apo-ACP by AcpS. This modification is essential for activity because fatty acids are bound in thioester linkage to the sulfhydryl of the prosthetic group.

The protein resides in the cytoplasm. Its pathway is lipid metabolism; fatty acid biosynthesis. In terms of biological role, carrier of the growing fatty acid chain in fatty acid biosynthesis. This Deinococcus radiodurans (strain ATCC 13939 / DSM 20539 / JCM 16871 / CCUG 27074 / LMG 4051 / NBRC 15346 / NCIMB 9279 / VKM B-1422 / R1) protein is Acyl carrier protein.